The chain runs to 509 residues: Activin receptor type-1 (509 aa).

Residues 1-20 (MVDGVMILPVLIMIALPSPS) form the signal peptide. At 21-123 (MEDEKPKVNP…FPGTQNFHLE (103 aa)) the chain is on the extracellular side. An N-linked (GlcNAc...) asparagine glycan is attached at asparagine 102. Residues 124-146 (VGLIILSVVFAVCLLACLLGVAL) traverse the membrane as a helical segment. At 147–509 (RKFKRRNQER…NSLDKLKTDC (363 aa)) the chain is on the cytoplasmic side. One can recognise a GS domain in the interval 178 to 207 (STLADLLDHSCTSGSGSGLPFLVQRTVARQ). A Protein kinase domain is found at 208-502 (ITLLECVGKG…KTLTKIDNSL (295 aa)). Residues 214-222 (VGKGRYGEV) and lysine 235 contribute to the ATP site. Aspartate 336 functions as the Proton acceptor in the catalytic mechanism. Serine 501 bears the Phosphoserine mark.

It belongs to the protein kinase superfamily. TKL Ser/Thr protein kinase family. TGFB receptor subfamily. In terms of assembly, interacts with FKBP1A. Interacts with FCHO1. Interacts with CLU. Interacts with type II receptors AMHR2 and ACVR2A. Interacts with BMP7. Interacts with GDF2/BMP9. Interacts with BMP6 (when glycosylated); the interaction may induce HAMP expression. Interacts with TSC22D1/TSC-22. Mg(2+) serves as cofactor. Requires Mn(2+) as cofactor. Expressed in normal parenchymal cells, endothelial cells, fibroblasts and tumor-derived epithelial cells.

The protein localises to the membrane. It catalyses the reaction L-threonyl-[receptor-protein] + ATP = O-phospho-L-threonyl-[receptor-protein] + ADP + H(+). It carries out the reaction L-seryl-[receptor-protein] + ATP = O-phospho-L-seryl-[receptor-protein] + ADP + H(+). In terms of biological role, bone morphogenetic protein (BMP) type I receptor that is involved in a wide variety of biological processes, including bone, heart, cartilage, nervous, and reproductive system development and regulation. As a type I receptor, forms heterotetrameric receptor complexes with the type II receptors AMHR2, ACVR2A or ACVR2B. Upon binding of ligands such as BMP7 or GDF2/BMP9 to the heteromeric complexes, type II receptors transphosphorylate ACVR1 intracellular domain. In turn, ACVR1 kinase domain is activated and subsequently phosphorylates SMAD1/5/8 proteins that transduce the signal. In addition to its role in mediating BMP pathway-specific signaling, suppresses TGFbeta/activin pathway signaling by interfering with the binding of activin to its type II receptor. Besides canonical SMAD signaling, can activate non-canonical pathways such as p38 mitogen-activated protein kinases/MAPKs. May promote the expression of HAMP, potentially via its interaction with BMP6. This is Activin receptor type-1 (ACVR1) from Homo sapiens (Human).